The following is a 288-amino-acid chain: Short chain aldehyde dehydrogenase 1 (288 aa).

NAD(+) is bound by residues 26 to 28 (SGI), aspartate 47, 72 to 73 (DV), and 99 to 101 (NAG). The active-site Proton donor is serine 153. Serine 153 and tyrosine 166 together coordinate substrate. Positions 166, 170, and 201 each coordinate NAD(+). The Proton acceptor role is filled by tyrosine 166. The active-site Proton donor/acceptor is the lysine 170.

This sequence belongs to the short-chain dehydrogenases/reductases (SDR) family. In terms of assembly, homodimer. As to expression, expressed in mature seeds.

It catalyses the reaction 4,5,8-trihydroxycasbene + 2 NAD(+) = jolkinol C + 2 NADH + 2 H(+). The enzyme catalyses a secondary alcohol + NAD(+) = a ketone + NADH + H(+). The catalysed reaction is a primary alcohol + NAD(+) = an aldehyde + NADH + H(+). It participates in secondary metabolite biosynthesis; terpenoid biosynthesis. In terms of biological role, involved in the biosynthesis of macrocyclic lathyrane type diterpenoids (also called Euphorbia factors) natural products, including the cyclization route from casbene to jolkinol C, a precursor for ingenol mebutate that is used to treat actinic keratosis, a precancerous skin condition. Catalyzes the conversion of 4,5,8-trihydroxycasbene into jolkinol C in presence of NAD. Also mediates the formation of casbene dione derivative and 4-ketocasbene from 4-hydroxy-8-ketocasbene and 4-hydroxycasbene, respectively. Together with CYP71D445, triggers the biosynthesis of 8-ketocasbene from 8-hydroxycasbene. This chain is Short chain aldehyde dehydrogenase 1, found in Euphorbia lathyris (Caper spurge).